The primary structure comprises 662 residues: MKTSSLTGSLFFTTPKFARLRFAFKLSFAIVLSLFLGFHLQLETPRWSVLTAAIVAAGPAFAAGGEPFSGAIRHRGMLRIIGTFIGCIGALVIIIATVRAPVVMLMLCCIWAGLCTWVSSLVKVENAYIFGLAGYTALIIIVSTQGTPLLTPQFAVERCSEIVLGIVCAILADLLFSPRSIKQDVDRSIGELLVDQYRLLQLSMSGTEKEAIDAAWHALVRKTTALSGMRSSLMLESSRWQNSNRRLTSLHTQSLMMITQACETYLILQDVPTPVKSSLKMVLDQPVESLRDVHCRVKALRHLIAADSRDVPPTLIDWVGAATRYLLLAKGVQANGRLNTIEADVLNSDVEIKAPSAETHHAMINGLRTGVATALGCLFWLSTGWTSGSVCMVMIAVVTSLAMRLPNPQMMAKDFLFGTIYALPLGALMFMFIMPSTQQSMLLLCLSLGGMAFFLGLEVQKRRLGSLGALASTINILVLDNPMTFNVSQFLDSAIGQIIGCFLALMVIMLIRDNTKAHTGRTLLNRFVYGAVSALTTNRARRKENHLPALYQQLFLLLNRFPDDIAKYRLALWLIIMHQRLRTLDIPQNAALSAFHRQIRATAEQVISARRDATRSRYFAQLLDELERYQQMLTEQQLPPSVTAPVGRLTGILRDYQHALSN.

11 helical membrane-spanning segments follow: residues 22 to 42 (FAFKLSFAIVLSLFLGFHLQL), 52 to 72 (AAIVAAGPAFAAGGEPFSGAI), 76 to 96 (GMLRIIGTFIGCIGALVIIIA), 102 to 122 (VVMLMLCCIWAGLCTWVSSLV), 129 to 149 (IFGLAGYTALIIIVSTQGTPL), 161 to 181 (EIVLGIVCAILADLLFSPRSI), 378 to 398 (LFWLSTGWTSGSVCMVMIAVV), 415 to 435 (FLFGTIYALPLGALMFMFIMP), 439 to 459 (QSMLLLCLSLGGMAFFLGLEV), 465 to 485 (GSLGALASTINILVLDNPMTF), and 491 to 511 (LDSAIGQIIGCFLALMVIMLI).

It belongs to the aromatic acid exporter ArAE (TC 2.A.85) family.

It is found in the cell inner membrane. In terms of biological role, forms an efflux pump with AaeA. Could function as a metabolic relief valve, allowing to eliminate certain compounds when they accumulate to high levels in the cell. This is p-hydroxybenzoic acid efflux pump subunit AaeB from Pectobacterium atrosepticum (strain SCRI 1043 / ATCC BAA-672) (Erwinia carotovora subsp. atroseptica).